Here is a 331-residue protein sequence, read N- to C-terminus: Holliday junction branch migration complex subunit RuvB (331 aa).

A large ATPase domain (RuvB-L) region spans residues 1 to 171 (MTEPLDAALR…FGIIEHLEYY (171 aa)). Residues leucine 9, arginine 10, glycine 51, lysine 54, threonine 55, threonine 56, 118–120 (EDF), arginine 161, tyrosine 171, and arginine 208 contribute to the ATP site. Threonine 55 contacts Mg(2+). Positions 172-242 (TPEEIGTNLL…RAQDALDKLG (71 aa)) are small ATPAse domain (RuvB-S). The tract at residues 245–331 (TAGLDERDKK…AESDLGLYTN (87 aa)) is head domain (RuvB-H). Positions 300 and 305 each coordinate DNA.

The protein belongs to the RuvB family. As to quaternary structure, homohexamer. Forms an RuvA(8)-RuvB(12)-Holliday junction (HJ) complex. HJ DNA is sandwiched between 2 RuvA tetramers; dsDNA enters through RuvA and exits via RuvB. An RuvB hexamer assembles on each DNA strand where it exits the tetramer. Each RuvB hexamer is contacted by two RuvA subunits (via domain III) on 2 adjacent RuvB subunits; this complex drives branch migration. In the full resolvosome a probable DNA-RuvA(4)-RuvB(12)-RuvC(2) complex forms which resolves the HJ.

Its subcellular location is the cytoplasm. The catalysed reaction is ATP + H2O = ADP + phosphate + H(+). Functionally, the RuvA-RuvB-RuvC complex processes Holliday junction (HJ) DNA during genetic recombination and DNA repair, while the RuvA-RuvB complex plays an important role in the rescue of blocked DNA replication forks via replication fork reversal (RFR). RuvA specifically binds to HJ cruciform DNA, conferring on it an open structure. The RuvB hexamer acts as an ATP-dependent pump, pulling dsDNA into and through the RuvAB complex. RuvB forms 2 homohexamers on either side of HJ DNA bound by 1 or 2 RuvA tetramers; 4 subunits per hexamer contact DNA at a time. Coordinated motions by a converter formed by DNA-disengaged RuvB subunits stimulates ATP hydrolysis and nucleotide exchange. Immobilization of the converter enables RuvB to convert the ATP-contained energy into a lever motion, pulling 2 nucleotides of DNA out of the RuvA tetramer per ATP hydrolyzed, thus driving DNA branch migration. The RuvB motors rotate together with the DNA substrate, which together with the progressing nucleotide cycle form the mechanistic basis for DNA recombination by continuous HJ branch migration. Branch migration allows RuvC to scan DNA until it finds its consensus sequence, where it cleaves and resolves cruciform DNA. The chain is Holliday junction branch migration complex subunit RuvB from Deinococcus geothermalis (strain DSM 11300 / CIP 105573 / AG-3a).